A 112-amino-acid polypeptide reads, in one-letter code: MTGHAPESTFNADGSRKMIATQQQCEDKNLPLSFRDYCAHLLIPLNDCRVSTYYAPWKCMDEKHAYEGCQYDEYLYRKIKKSEQDEAERIKREVVIEKENPKDRPYEEIKLS.

The region spanning 35-77 (RDYCAHLLIPLNDCRVSTYYAPWKCMDEKHAYEGCQYDEYLYR) is the CHCH domain. 2 consecutive short sequence motifs (cx9C motif) follow at residues 38–48 (CAHLLIPLNDC) and 59–69 (CMDEKHAYEGC). 2 disulfides stabilise this stretch: cysteine 38-cysteine 69 and cysteine 48-cysteine 59.

This sequence belongs to the complex I NDUFB7 subunit family. Complex I is composed of 45 different subunits.

It is found in the mitochondrion inner membrane. The protein resides in the mitochondrion intermembrane space. Accessory subunit of the mitochondrial membrane respiratory chain NADH dehydrogenase (Complex I), that is believed not to be involved in catalysis. Complex I functions in the transfer of electrons from NADH to the respiratory chain. The immediate electron acceptor for the enzyme is believed to be ubiquinone. In Dictyostelium discoideum (Social amoeba), this protein is NADH dehydrogenase [ubiquinone] 1 beta subcomplex subunit 7 (ndufb7).